Here is an 887-residue protein sequence, read N- to C-terminus: Translation initiation factor IF-2 (887 aa).

Residues 1-259 (MSDEQDQGET…KVGDDRRRGA (259 aa)) form a disordered region. Positions 62-94 (GRPSAPSRASGGAAAPRGLTAAEQAARQRAVVE) are enriched in low complexity. Basic and acidic residues-rich tracts occupy residues 95 to 111 (QQREAARLEAERREQEK) and 119 to 158 (EEARRKAEEEARAAEEAERLRAEEEARRREEEEAERRRAA). Low complexity predominate over residues 159–210 (EASQATAAPPAPAAAASPRAAMPAPTAAPARPGAAPARRTAPVPPATSASET). A compositionally biased stretch (basic and acidic residues) spans 250-259 (KVGDDRRRGA). The tr-type G domain occupies 386-556 (VRPPVVTIMG…LLQAELLDLK (171 aa)). The segment at 395–402 (GHVDHGKT) is G1. A GTP-binding site is contributed by 395-402 (GHVDHGKT). A G2 region spans residues 420-424 (GITQH). Residues 442–445 (DTPG) form a G3 region. GTP is bound by residues 442–446 (DTPGH) and 496–499 (NKID). A G4 region spans residues 496-499 (NKID). Residues 532–534 (SAL) are G5.

Belongs to the TRAFAC class translation factor GTPase superfamily. Classic translation factor GTPase family. IF-2 subfamily.

The protein resides in the cytoplasm. Its function is as follows. One of the essential components for the initiation of protein synthesis. Protects formylmethionyl-tRNA from spontaneous hydrolysis and promotes its binding to the 30S ribosomal subunits. Also involved in the hydrolysis of GTP during the formation of the 70S ribosomal complex. This chain is Translation initiation factor IF-2, found in Acidiphilium cryptum (strain JF-5).